The sequence spans 217 residues: AGAAELQPELAVAEHVRYESTGPALCTVVFLLVYFFGMASSIWWVILSLTWFLAAGMKWGNEAIAGYAQYFHLAAWLLPSVKSIAVLALSSVDGDPVAGICYVGNQSLENLRGFVLAPLVVYLFTGSLFLLAGFVSLFRIRSVIKQGGTKTDKLEKLMIRIGIFTVLYTVPATIVIACYIYEQHNREAWEQAQNCSCPGDPHRPKPDYAVFMLKYFM.

The Extracellular segment spans residues 1–26 (AGAAELQPELAVAEHVRYESTGPALC). The helical transmembrane segment at 27–47 (TVVFLLVYFFGMASSIWWVIL) threads the bilayer. Over 48 to 69 (SLTWFLAAGMKWGNEAIAGYAQ) the chain is Cytoplasmic. Residues 70–90 (YFHLAAWLLPSVKSIAVLALS) traverse the membrane as a helical segment. Residues 91-113 (SVDGDPVAGICYVGNQSLENLRG) lie on the Extracellular side of the membrane. The N-linked (GlcNAc...) asparagine glycan is linked to asparagine 105. A helical membrane pass occupies residues 114-134 (FVLAPLVVYLFTGSLFLLAGF). Residues 135-160 (VSLFRIRSVIKQGGTKTDKLEKLMIR) are Cytoplasmic-facing. Residues 161-181 (IGIFTVLYTVPATIVIACYIY) form a helical membrane-spanning segment. At 182–209 (EQHNREAWEQAQNCSCPGDPHRPKPDYA) the chain is on the extracellular side. Asparagine 194 is a glycosylation site (N-linked (GlcNAc...) asparagine). Residues 210 to 217 (VFMLKYFM) form a helical membrane-spanning segment.

This sequence belongs to the G-protein coupled receptor Fz/Smo family.

The protein resides in the membrane. It is found in the cell membrane. Its function is as follows. Receptor for Wnt proteins. Most of frizzled receptors are coupled to the beta-catenin canonical signaling pathway, which leads to the activation of disheveled proteins, inhibition of GSK-3 kinase, nuclear accumulation of beta-catenin and activation of Wnt target genes. A second signaling pathway involving PKC and calcium fluxes has been seen for some family members, but it is not yet clear if it represents a distinct pathway or if it can be integrated in the canonical pathway, as PKC seems to be required for Wnt-mediated inactivation of GSK-3 kinase. Both pathways seem to involve interactions with G-proteins. May be involved in transduction and intercellular transmission of polarity information during tissue morphogenesis and/or in differentiated tissues. The polypeptide is Frizzled-8 (FZD8) (Gallus gallus (Chicken)).